The primary structure comprises 2000 residues: Myosin-14 (2000 aa).

Alanine 2 carries the post-translational modification N-acetylalanine. A Phosphothreonine modification is found at threonine 33. Residues 47–97 form the Myosin N-terminal SH3-like domain; it reads TARRMVWVPSELHGFEAAALRDEGEEEAEVELAESGRRLRLPRDQIQRMNP. A Phosphoserine modification is found at serine 56. In terms of domain architecture, Myosin motor spans 101 to 804; that stretch reads SKAEDMAELT…VLAQLEEERD (704 aa). 194 to 201 contacts ATP; that stretch reads GESGAGKT. Residues 682-704 form an actin-binding region; that stretch reads LSRLMATLSNTNPSFVRCIVPNH. The region spanning 807–836 is the IQ domain; that stretch reads VTDIIVSFQAAARGYLARRAFQRRQQQQSA. The stretch at 866–1951 forms a coiled coil; sequence LQVTRQDEVL…VTTLRNRLRR (1086 aa). Serine 925 is subject to Phosphoserine. Positions 1173–1197 are disordered; sequence RGELEDTLDSTNAQQELRSKREQEV. Threonine 1198 is subject to Phosphothreonine. Residues serine 1249 and serine 1280 each carry the phosphoserine modification. Disordered regions lie at residues 1260-1311, 1597-1629, 1720-1751, 1910-1942, and 1967-2000; these read ELSS…AELE, HERD…RDEE, SDRA…TLEE, AEEE…NREV, and LEEG…ATPQ. Residues 1290–1304 show a composition bias toward basic and acidic residues; that stretch reads SDSERARSEAAEKLQ. Basic and acidic residues predominate over residues 1720–1732; it reads SDRARRQAQQDRD. The span at 1971 to 1980 shows a compositional bias: acidic residues; sequence VASDEEEAEG. A phosphoserine mark is found at serine 1973 and serine 1985. Positions 1981-1991 are enriched in low complexity; it reads AEPGSAPGQEP. Threonine 1998 is modified (phosphothreonine).

The protein belongs to the TRAFAC class myosin-kinesin ATPase superfamily. Myosin family. As to quaternary structure, myosin is a hexameric protein that consists of 2 heavy chain subunits (MHC), 2 alkali light chain subunits (MLC) and 2 regulatory light chain subunits (MLC-2). Highest levels in lung, kidney, brain and colon, very low levels in liver and bladder and no expression in spleen or seminal vesicle (at protein level). Isoform 1 is expressed in liver, kidney and testis with low levels in skeletal muscle and heart. Isoform 1 and isoform 2 are expressed in brain and lung. Isoform 2 is the main isoform expressed in skeletal muscle and heart. Isoform 3 is limited to brain stem, cerebellum and spinal cord.

Functionally, cellular myosin that appears to play a role in cytokinesis, cell shape, and specialized functions such as secretion and capping. This Mus musculus (Mouse) protein is Myosin-14 (Myh14).